Here is a 70-residue protein sequence, read N- to C-terminus: uncharacterized protein (70 aa).

A signal peptide spans 1–16 (MKLLLVLITLIIAALA).

This is an uncharacterized protein from Orgyia pseudotsugata (Douglas-fir tussock moth).